The sequence spans 440 residues: Thymidine phosphorylase (440 aa).

It belongs to the thymidine/pyrimidine-nucleoside phosphorylase family. In terms of assembly, homodimer.

The catalysed reaction is thymidine + phosphate = 2-deoxy-alpha-D-ribose 1-phosphate + thymine. Its pathway is pyrimidine metabolism; dTMP biosynthesis via salvage pathway; dTMP from thymine: step 1/2. The enzymes which catalyze the reversible phosphorolysis of pyrimidine nucleosides are involved in the degradation of these compounds and in their utilization as carbon and energy sources, or in the rescue of pyrimidine bases for nucleotide synthesis. This Burkholderia pseudomallei (strain K96243) protein is Thymidine phosphorylase.